Consider the following 120-residue polypeptide: Aspartate 1-decarboxylase (120 aa).

The active-site Schiff-base intermediate with substrate; via pyruvic acid is the S25. S25 is modified (pyruvic acid (Ser)). T57 is a substrate binding site. The Proton donor role is filled by Y58. 73–75 (GAA) contributes to the substrate binding site.

Belongs to the PanD family. As to quaternary structure, heterooctamer of four alpha and four beta subunits. Requires pyruvate as cofactor. In terms of processing, is synthesized initially as an inactive proenzyme, which is activated by self-cleavage at a specific serine bond to produce a beta-subunit with a hydroxyl group at its C-terminus and an alpha-subunit with a pyruvoyl group at its N-terminus.

It localises to the cytoplasm. The enzyme catalyses L-aspartate + H(+) = beta-alanine + CO2. It functions in the pathway cofactor biosynthesis; (R)-pantothenate biosynthesis; beta-alanine from L-aspartate: step 1/1. Functionally, catalyzes the pyruvoyl-dependent decarboxylation of aspartate to produce beta-alanine. The chain is Aspartate 1-decarboxylase from Ralstonia pickettii (strain 12J).